A 590-amino-acid polypeptide reads, in one-letter code: Ovarian abundant message protein (590 aa).

The disordered stretch occupies residues 1-71 (MQGTDNAPPG…SPGQPLVEEQ (71 aa)). Basic residues predominate over residues 18–29 (SPRRIRHVRRHY). 27 consecutive repeat copies span residues 66–71 (PLVEEQ), 72–77 (PLVEER), 78–83 (PPVEEQ), 84–89 (PLVEEQ), 90–95 (PLVEEQ), 96–101 (PLVEEQ), 102–107 (PLVEEQ), 108–113 (PLVEGQ), 114–119 (PLVEEQ), 120–125 (PLVEGQ), 126–131 (PPVEGQ), 132–137 (PLVEEQ), 138–143 (PLVEGQ), 144–149 (PLVEGQ), 150–155 (PLVEGQ), 156–161 (PLVEGQ), 162–167 (PLVGGQ), 168–173 (PLVGGQ), 174–179 (PLVEGQ), 180–185 (PLVEGQ), 300–305 (PLAGAP), 306–311 (PLAGVP), 312–317 (PLAVAL), 318–323 (PLAGAP), 324–329 (PLAGVP), 330–335 (PLAGAP), and 336–341 (PLAGAL). A 20 X 6 AA tandem repeats of P-[LP]-V-[EG]-[EG]-[QR] region spans residues 66–185 (PLVEEQPLVE…VEGQPLVEGQ (120 aa)). An 8 X 6 AA approximate tandem repeats of P-L-A-[GV]-[AV]-[PL] region spans residues 300–347 (PLAGAPPLAGVPPLAVALPLAGAPPLAGVPPLAGAPPLAGALPRAGVL). The 2-8; approximate repeat unit spans residues 342–347 (PRAGVL). 16 repeat units span residues 348–353 (RRAGVL), 354–359 (RRAGVL), 360–365 (RRAGVL), 366–371 (RRAGVL), 372–377 (RRAGVL), 378–383 (RRAGVL), 384–389 (RRAGVL), 390–395 (RRAGVL), 396–401 (RRAGVL), 402–407 (RRADVL), 408–413 (RRADVV), 419–424 (QQLADV), 425–430 (QRLADV), 431–436 (QRLADV), 437–442 (QRLADV), and 443–448 (QRLADV). Residues 348–413 (RRAGVLRRAG…ADVLRRADVV (66 aa)) form an 11 X 6 AA tandem repeats of approximate R-R-A-[GD]-V-[LV] region. Residues 419–454 (QQLADVQRLADVQRLADVQRLADVQRLADVQRLVCV) form a 6 X 6 AA approximate tandem repeats of Q-[QR]-L-A-D-V region. The stretch at 449–454 (QRLVCV) is one 4-6; approximate repeat.

In terms of tissue distribution, somatic ovarian tissue.

This is Ovarian abundant message protein (OAM) from Ascaris suum (Pig roundworm).